Consider the following 138-residue polypeptide: Large ribosomal subunit protein uL16 (138 aa).

Positions 1-13 (MLQPKRRKYRKEQ) are enriched in basic residues. Residues 1-24 (MLQPKRRKYRKEQKGRNTGKATRG) are disordered.

The protein belongs to the universal ribosomal protein uL16 family. As to quaternary structure, part of the 50S ribosomal subunit.

Binds 23S rRNA and is also seen to make contacts with the A and possibly P site tRNAs. This is Large ribosomal subunit protein uL16 from Burkholderia ambifaria (strain ATCC BAA-244 / DSM 16087 / CCUG 44356 / LMG 19182 / AMMD) (Burkholderia cepacia (strain AMMD)).